We begin with the raw amino-acid sequence, 1758 residues long: Collagen alpha-2(IV) chain (1758 aa).

A signal peptide spans methionine 1–serine 26. The segment at glutamine 27–glycine 42 is 7S domain. The segment at glycine 42 to alanine 1527 is triple-helical region. Low complexity predominate over residues methionine 47 to arginine 62. 4 disordered regions span residues methionine 47–glycine 943, glycine 955–glycine 1304, glycine 1316–proline 1339, and glycine 1367–glycine 1525. The segment covering glycine 102–glycine 111 has biased composition (gly residues). Positions proline 134–proline 149 are enriched in pro residues. Basic and acidic residues predominate over residues tyrosine 189–aspartate 198. Low complexity predominate over residues proline 224 to valine 234. The O-linked (Xyl...) (glycosaminoglycan) serine glycan is linked to serine 248. Basic and acidic residues predominate over residues proline 258–proline 267. Residues glycine 268–glycine 283 show a composition bias toward gly residues. Residues proline 367–proline 382 are compositionally biased toward pro residues. Residues glycine 398–glycine 407 show a composition bias toward gly residues. 2 stretches are compositionally biased toward low complexity: residues tyrosine 408–proline 417 and alanine 429–proline 439. Residues lysine 464–glutamate 479 are compositionally biased toward basic and acidic residues. 2 stretches are compositionally biased toward low complexity: residues glycine 495–asparagine 509 and proline 568–proline 584. The segment covering proline 638–proline 648 has biased composition (pro residues). Gly residues-rich tracts occupy residues glycine 693–glycine 702, glycine 737–glycine 746, and glycine 782–glycine 791. A compositionally biased stretch (low complexity) spans leucine 839–proline 858. Positions glycine 859 to glycine 868 are enriched in gly residues. Low complexity predominate over residues alanine 929–leucine 938. Positions glycine 958 to glycine 967 are enriched in gly residues. Positions leucine 968–valine 980 are enriched in low complexity. Residues glycine 988–glycine 997 are compositionally biased toward gly residues. A compositionally biased stretch (low complexity) spans leucine 1040–proline 1056. Residues glycine 1194–glycine 1203 show a composition bias toward gly residues. Positions phenylalanine 1237–serine 1250 are enriched in low complexity. The segment covering glycine 1251–glycine 1260 has biased composition (gly residues). A compositionally biased stretch (gly residues) spans glycine 1373 to glycine 1382. 2 stretches are compositionally biased toward low complexity: residues leucine 1413 to proline 1425 and glycine 1433 to leucine 1454. Gly residues-rich tracts occupy residues glycine 1492 to glycine 1501 and glycine 1507 to glycine 1516. Positions glycine 1531–threonine 1754 constitute a Collagen IV NC1 domain. Disulfide bonds link cysteine 1546-cysteine 1635, cysteine 1579-cysteine 1632, cysteine 1591-cysteine 1597, cysteine 1654-cysteine 1750, cysteine 1688-cysteine 1747, and cysteine 1700-cysteine 1707.

Belongs to the type IV collagen family. As to quaternary structure, trimers of two alpha 1(IV) and one alpha 2(IV) chain. Type IV collagen forms a mesh-like network linked through intermolecular interactions between 7S domains and between NC1 domains. In terms of processing, prolines at the third position of the tripeptide repeating unit (G-X-Y) are hydroxylated in some or all of the chains. Post-translationally, type IV collagens contain numerous cysteine residues which are involved in inter- and intramolecular disulfide bonding. 12 of these, located in the NC1 domain, are conserved in all known type IV collagens. The trimeric structure of the NC1 domains is stabilized by covalent bonds between Lys and Met residues. Localizes to the basement membrane between distal tip cells and the germline. Localizes to the intestinal basement membrane.

The protein resides in the secreted. It localises to the extracellular space. It is found in the extracellular matrix. The protein localises to the basement membrane. Collagen type IV is specific for basement membranes. Together with fbl-1 and downstream of metalloprotease mig-17, recruits nidogen nid-1 to the gonad basement membrane thereby probably inducing basement membrane remodeling required for the directional migration of distal tip cells. Required to restrict presynaptic growth at the neuromuscular junctions in late larval stage and in adult motor neurons. Vital for embryonic development. This Caenorhabditis elegans protein is Collagen alpha-2(IV) chain.